The chain runs to 107 residues: Acidic phospholipase A2 2 (107 aa).

6 cysteine pairs are disulfide-bonded: Cys-26/Cys-100, Cys-28/Cys-38, Cys-37/Cys-82, Cys-43/Cys-107, Cys-44/Cys-75, and Cys-62/Cys-73. Residues Tyr-27, Gly-29, and Gly-31 each coordinate Ca(2+). The active site involves His-41. Asp-42 provides a ligand contact to Ca(2+). Asp-76 is an active-site residue.

The cofactor is Ca(2+). Expressed by the venom gland.

The protein localises to the secreted. The catalysed reaction is a 1,2-diacyl-sn-glycero-3-phosphocholine + H2O = a 1-acyl-sn-glycero-3-phosphocholine + a fatty acid + H(+). PLA2 catalyzes the calcium-dependent hydrolysis of the 2-acyl groups in 3-sn-phosphoglycerides. This Bothrops insularis (Golden lancehead) protein is Acidic phospholipase A2 2.